A 315-amino-acid chain; its full sequence is Ribose-phosphate pyrophosphokinase (315 aa).

Residues 37–39 (DGE) and 96–97 (RQ) contribute to the ATP site. Mg(2+) is bound by residues His-131 and Asp-170. Lys-194 is an active-site residue. D-ribose 5-phosphate contacts are provided by residues Arg-196, Asp-220, and 224-228 (DTGGT).

It belongs to the ribose-phosphate pyrophosphokinase family. Class I subfamily. Homohexamer. Mg(2+) is required as a cofactor.

It localises to the cytoplasm. It carries out the reaction D-ribose 5-phosphate + ATP = 5-phospho-alpha-D-ribose 1-diphosphate + AMP + H(+). It participates in metabolic intermediate biosynthesis; 5-phospho-alpha-D-ribose 1-diphosphate biosynthesis; 5-phospho-alpha-D-ribose 1-diphosphate from D-ribose 5-phosphate (route I): step 1/1. Functionally, involved in the biosynthesis of the central metabolite phospho-alpha-D-ribosyl-1-pyrophosphate (PRPP) via the transfer of pyrophosphoryl group from ATP to 1-hydroxyl of ribose-5-phosphate (Rib-5-P). This Photorhabdus laumondii subsp. laumondii (strain DSM 15139 / CIP 105565 / TT01) (Photorhabdus luminescens subsp. laumondii) protein is Ribose-phosphate pyrophosphokinase.